A 238-amino-acid polypeptide reads, in one-letter code: Outer membrane protein A (238 aa).

A run of 5 beta stranded transmembrane segments spans residues 1-8 (LTAKLGYP), 13-21 (LDIYTRLGG), 43-52 (PVFAGGVEYA), 57-64 (IATRLEYQ), and 83-91 (LLSVGVSYR). 3 repeat units span residues 104 to 105 (AP), 106 to 107 (AP), and 108 to 109 (AP). A 3 X 2 AA tandem repeats of A-P region spans residues 104–109 (APAPAP). Positions 111-238 (VQTKHFTLKS…RRVEIEVKGI (128 aa)) constitute an OmpA-like domain. Cysteine 212 and cysteine 224 are disulfide-bonded.

It belongs to the outer membrane OOP (TC 1.B.6) superfamily. OmpA family. As to quaternary structure, monomer and homodimer.

The protein resides in the cell outer membrane. In terms of biological role, with TolR probably plays a role in maintaining the position of the peptidoglycan cell wall in the periplasm. Acts as a porin with low permeability that allows slow penetration of small solutes; an internal gate slows down solute passage. The polypeptide is Outer membrane protein A (Citrobacter freundii).